The sequence spans 312 residues: Glyoxylate/hydroxypyruvate reductase A (312 aa).

Arg-227 is a catalytic residue. His-275 serves as the catalytic Proton donor.

This sequence belongs to the D-isomer specific 2-hydroxyacid dehydrogenase family. GhrA subfamily.

The protein localises to the cytoplasm. The catalysed reaction is glycolate + NADP(+) = glyoxylate + NADPH + H(+). It carries out the reaction (R)-glycerate + NAD(+) = 3-hydroxypyruvate + NADH + H(+). The enzyme catalyses (R)-glycerate + NADP(+) = 3-hydroxypyruvate + NADPH + H(+). Catalyzes the NADPH-dependent reduction of glyoxylate and hydroxypyruvate into glycolate and glycerate, respectively. This chain is Glyoxylate/hydroxypyruvate reductase A, found in Salmonella paratyphi C (strain RKS4594).